The sequence spans 67 residues: Archaeal histone HAN1 subunit A (67 aa).

2 interaction with DNA regions span residues 20–22 and 54–57; these read RVS and KTVK.

The protein belongs to the archaeal histone HMF family. As to quaternary structure, heterodimer. Dimers then assemble into higher oligomers, with the DNA wrapped around the protein core.

Its subcellular location is the cytoplasm. It is found in the chromosome. Its function is as follows. Binds and compact DNA (95 to 150 base pairs) to form nucleosome-like structures that contain positive DNA supercoils. Increases the resistance of DNA to thermal denaturation (in vitro). This chain is Archaeal histone HAN1 subunit A (han1A), found in Thermococcus zilligii.